The chain runs to 899 residues: Probable dipeptidyl-aminopeptidase B (899 aa).

Disordered regions lie at residues Met-1 to Ser-37 and Lys-51 to Ser-84. Over Met-1–Arg-91 the chain is Cytoplasmic. Positions Ser-22 to Ser-37 are enriched in low complexity. Over residues Asn-61–Asp-74 the composition is skewed to basic and acidic residues. A helical; Signal-anchor for type II membrane protein membrane pass occupies residues Leu-92–Trp-112. The Vacuolar portion of the chain corresponds to Gly-113–Thr-899. Residues Asn-149, Asn-194, Asn-347, Asn-409, Asn-513, Asn-638, and Asn-643 are each glycosylated (N-linked (GlcNAc...) asparagine). Ser-752 (charge relay system) is an active-site residue. The N-linked (GlcNAc...) asparagine glycan is linked to Asn-811. Active-site charge relay system residues include Asp-829 and His-862.

It belongs to the peptidase S9B family.

The protein localises to the vacuole membrane. It catalyses the reaction Release of an N-terminal dipeptide, Xaa-Yaa-|-Zaa-, from a polypeptide, preferentially when Yaa is Pro, provided Zaa is neither Pro nor hydroxyproline.. In terms of biological role, type IV dipeptidyl-peptidase which removes N-terminal dipeptides sequentially from polypeptides having unsubstituted N-termini provided that the penultimate residue is proline. The sequence is that of Probable dipeptidyl-aminopeptidase B (dapB) from Talaromyces marneffei (strain ATCC 18224 / CBS 334.59 / QM 7333) (Penicillium marneffei).